Here is a 359-residue protein sequence, read N- to C-terminus: Phospho-N-acetylmuramoyl-pentapeptide-transferase (359 aa).

The next 10 helical transmembrane spans lie at 3–23 (QILI…PVLI), 55–75 (VAIL…GLAL), 84–104 (GLLV…DDLI), 120–140 (TVGI…FGNA), 156–176 (IATV…LVSA), 187–207 (LDGL…LITF), 231–251 (LALV…WNAA), 255–275 (IFMG…LSVT), 280–300 (ILAV…VVQI), and 334–354 (FWLL…GEWL).

This sequence belongs to the glycosyltransferase 4 family. MraY subfamily. The cofactor is Mg(2+).

It is found in the cell membrane. The catalysed reaction is UDP-N-acetyl-alpha-D-muramoyl-L-alanyl-gamma-D-glutamyl-meso-2,6-diaminopimeloyl-D-alanyl-D-alanine + di-trans,octa-cis-undecaprenyl phosphate = di-trans,octa-cis-undecaprenyl diphospho-N-acetyl-alpha-D-muramoyl-L-alanyl-D-glutamyl-meso-2,6-diaminopimeloyl-D-alanyl-D-alanine + UMP. It participates in cell wall biogenesis; peptidoglycan biosynthesis. Catalyzes the initial step of the lipid cycle reactions in the biosynthesis of the cell wall peptidoglycan: transfers peptidoglycan precursor phospho-MurNAc-pentapeptide from UDP-MurNAc-pentapeptide onto the lipid carrier undecaprenyl phosphate, yielding undecaprenyl-pyrophosphoryl-MurNAc-pentapeptide, known as lipid I. This Mycobacterium sp. (strain JLS) protein is Phospho-N-acetylmuramoyl-pentapeptide-transferase.